Reading from the N-terminus, the 7785-residue chain is Probable non-canonical nonribosomal peptide synthetase (NRPS) CymA (7785 aa).

3 Carrier domains span residues 487 to 562, 1908 to 1983, and 2958 to 3033; these read TARS…QRQE, HART…SEQQ, and SPGM…LEGG. O-(pantetheine 4'-phosphoryl)serine occurs at positions 522, 1943, and 2993. An LRR 1 repeat occupies 3088–3111; sequence RLALADVVVRHEALRTVFAERAGN. 3 consecutive Carrier domains span residues 3978-4053, 5002-5077, and 6389-6464; these read APRT…SEQQ, EPRT…LEAN, and GPRD…AQGS. An O-(pantetheine 4'-phosphoryl)serine mark is found at S4013, S5037, and S6424. One copy of the LRR 2 repeat lies at 6853–6875; that stretch reads TGVSRVDLSVNAIETFDDHGLPA. Positions 7432–7507 constitute a Carrier 7 domain; the sequence is GPRTPQEEIL…QLAEQLGSDG (76 aa). S7467 carries the post-translational modification O-(pantetheine 4'-phosphoryl)serine.

The cofactor is pantetheine 4'-phosphate.

Probable non-canonical nonribosomal peptide synthetase (NRPS); part of the gene cluster that mediates the biosynthesis of cyclic heptapeptides, known as cyclomarins and also of cyclic dipeptides, called cyclomarazines, which have both antimicrobial and cytotoxic effects. First, CymD catalyzes the reverse N-prenylation of monomeric L-tryptophan with dimethylallyl diphosphate (DMAPP) to form N-(1,1-dimethylallyl)-tryptophan (r-N-DMAT). The N-(1,1-dimethylallyl)-tryptophan produced by CymD is then combined with a range of standard and nonproteinogenic amino acid substrates to synthesize the peptides, a process that is probably catalyzed by the non-canonical nonribosomal peptide synthetase (NRPS), CymA. Other proteins in the cluster catalyze further modifications of the peptides including CymV which catalyzes the oxidation of olefinic cyclomarins and cyclomarazines to their respective epoxide derivatives. The sequence is that of Probable non-canonical nonribosomal peptide synthetase (NRPS) CymA from Salinispora arenicola (strain CNS-205).